The following is a 143-amino-acid chain: NADH-quinone oxidoreductase subunit A (143 aa).

3 consecutive transmembrane segments (helical) span residues 8-28 (FGNV…GYLT), 63-83 (FYVV…LYPW), and 93-113 (FALI…AYAW).

The protein belongs to the complex I subunit 3 family. NDH-1 is composed of 14 different subunits. Subunits NuoA, H, J, K, L, M, N constitute the membrane sector of the complex.

The protein localises to the cell inner membrane. It catalyses the reaction a quinone + NADH + 5 H(+)(in) = a quinol + NAD(+) + 4 H(+)(out). Its function is as follows. NDH-1 shuttles electrons from NADH, via FMN and iron-sulfur (Fe-S) centers, to quinones in the respiratory chain. The immediate electron acceptor for the enzyme in this species is believed to be a menaquinone. Couples the redox reaction to proton translocation (for every two electrons transferred, four hydrogen ions are translocated across the cytoplasmic membrane), and thus conserves the redox energy in a proton gradient. The sequence is that of NADH-quinone oxidoreductase subunit A from Pelodictyon phaeoclathratiforme (strain DSM 5477 / BU-1).